A 400-amino-acid polypeptide reads, in one-letter code: Phosphoglycerate kinase (400 aa).

Substrate is bound by residues 23–25 (DLN), Arg38, 61–64 (HFGR), Arg120, and Arg153. ATP contacts are provided by residues Lys203, Glu325, and 355–358 (GGDT).

It belongs to the phosphoglycerate kinase family. Monomer.

The protein localises to the cytoplasm. The enzyme catalyses (2R)-3-phosphoglycerate + ATP = (2R)-3-phospho-glyceroyl phosphate + ADP. Its pathway is carbohydrate degradation; glycolysis; pyruvate from D-glyceraldehyde 3-phosphate: step 2/5. The sequence is that of Phosphoglycerate kinase from Methylobacterium radiotolerans (strain ATCC 27329 / DSM 1819 / JCM 2831 / NBRC 15690 / NCIMB 10815 / 0-1).